A 1362-amino-acid polypeptide reads, in one-letter code: Mediator of RNA polymerase II transcription subunit 12 (1362 aa).

The tract at residues 31–51 is disordered; that stretch reads LRPPDDIHPLVDPARIGDSVY.

The protein belongs to the Mediator complex subunit 12 family. As to quaternary structure, component of the SRB8-11 complex, which itself associates with the Mediator complex.

The protein resides in the nucleus. Its function is as follows. Component of the SRB8-11 complex. The SRB8-11 complex is a regulatory module of the Mediator complex which is itself involved in regulation of basal and activated RNA polymerase II-dependent transcription. The SRB8-11 complex may be involved in the transcriptional repression of a subset of genes regulated by Mediator. It may inhibit the association of the Mediator complex with RNA polymerase II to form the holoenzyme complex. The chain is Mediator of RNA polymerase II transcription subunit 12 (SRB8) from Yarrowia lipolytica (strain CLIB 122 / E 150) (Yeast).